The chain runs to 92 residues: Large ribosomal subunit protein eL43 (92 aa).

Zn(2+) is bound by residues cysteine 39, cysteine 42, cysteine 57, and cysteine 60. The C4-type zinc-finger motif lies at 39–60; it reads CSFCGKTKMKRRAVGIWHCGSC.

This sequence belongs to the eukaryotic ribosomal protein eL43 family. Component of the large ribosomal subunit.

It localises to the cytoplasm. In terms of biological role, component of the large ribosomal subunit. The ribosome is a large ribonucleoprotein complex responsible for the synthesis of proteins in the cell. In Mus musculus (Mouse), this protein is Large ribosomal subunit protein eL43 (Rpl37a).